The primary structure comprises 105 residues: Extracellular guanyl-specific ribonuclease Fl1 (105 aa).

2 disulfide bridges follow: cysteine 5–cysteine 101 and cysteine 23–cysteine 82. Residue histidine 39 is part of the active site. Glutamate 57 serves as the catalytic Proton acceptor. The active-site Proton donor is the histidine 90.

The protein belongs to the ribonuclease N1/T1 family.

The enzyme catalyses [RNA] containing guanosine + H2O = an [RNA fragment]-3'-guanosine-3'-phosphate + a 5'-hydroxy-ribonucleotide-3'-[RNA fragment].. The polypeptide is Extracellular guanyl-specific ribonuclease Fl1 (Gibberella baccata (Fusarium lateritium)).